The primary structure comprises 185 residues: Ribosome-recycling factor (185 aa).

It belongs to the RRF family.

It is found in the cytoplasm. Its function is as follows. Responsible for the release of ribosomes from messenger RNA at the termination of protein biosynthesis. May increase the efficiency of translation by recycling ribosomes from one round of translation to another. The protein is Ribosome-recycling factor of Saccharophagus degradans (strain 2-40 / ATCC 43961 / DSM 17024).